Reading from the N-terminus, the 70-residue chain is uncharacterized protein (70 aa).

This is an uncharacterized protein from Schizosaccharomyces pombe (strain 972 / ATCC 24843) (Fission yeast).